Reading from the N-terminus, the 355-residue chain is Ubiquinone biosynthesis protein COQ4 homolog, mitochondrial (355 aa).

His-134, Asp-135, His-138, and Glu-150 together coordinate Zn(2+).

The protein belongs to the COQ4 family. Component of a multi-subunit COQ enzyme complex. The cofactor is Zn(2+).

The protein localises to the mitochondrion inner membrane. It carries out the reaction a 4-hydroxy-3-methoxy-5-(all-trans-polyprenyl)benzoate + H(+) = a 2-methoxy-6-(all-trans-polyprenyl)phenol + CO2. The protein operates within cofactor biosynthesis; ubiquinone biosynthesis. Functionally, lyase that catalyzes the C1-decarboxylation of 4-hydroxy-3-methoxy-5-(all-trans-polyprenyl)benzoic acid into 2-methoxy-6-(all-trans-polyprenyl)phenol during ubiquinone biosynthesis. In Plasmodium yoelii yoelii, this protein is Ubiquinone biosynthesis protein COQ4 homolog, mitochondrial.